Consider the following 90-residue polypeptide: MQRLKKSEAKQVVGGLSFWSFSAGVIMIVNAFSTLINTALDISEAANANNANGNGSSYSYKRRNSQKDYFSTGRFRLGLTPGKSSYSFPV.

A helical transmembrane segment spans residues 12–32 (VVGGLSFWSFSAGVIMIVNAF).

It is found in the membrane. This is an uncharacterized protein from Mycoplasma pneumoniae (strain ATCC 29342 / M129 / Subtype 1) (Mycoplasmoides pneumoniae).